A 741-amino-acid chain; its full sequence is Condensin complex subunit 2 (741 aa).

A disordered region spans residues 1 to 67 (MGPPGPALPA…NDDEKERLQR (67 aa)). Ser-15, Ser-25, and Ser-28 each carry phosphoserine. At Thr-49 the chain carries Phosphothreonine. Ser-70, Ser-78, Ser-81, Ser-87, Ser-89, Ser-92, Ser-96, Ser-201, and Ser-233 each carry phosphoserine. A compositionally biased stretch (acidic residues) spans 361-377 (CGDFPDGSLGDDFDAND). The segment at 361 to 383 (CGDFPDGSLGDDFDANDEPDHTA) is disordered. Ser-432 carries the phosphoserine modification. Positions 447 to 467 (FRPRRKQDAPSQSENKKKSTK) are disordered. Residue Lys-488 forms a Glycyl lysine isopeptide (Lys-Gly) (interchain with G-Cter in SUMO2) linkage. Ser-496 carries the phosphoserine modification. 2 positions are modified to phosphothreonine: Thr-598 and Thr-605. The residue at position 637 (Lys-637) is an N6-acetyllysine.

Belongs to the CND2 (condensin subunit 2) family. As to quaternary structure, component of the condensin complex, which contains the SMC2 and SMC4 heterodimer, and three non SMC subunits that probably regulate the complex: NCAPH/BRRN1, NCAPD2/CAPD2 and NCAPG. Phosphorylated by CDK1. Its phosphorylation, as well as that of NCAPD2 and NCAPG subunits, activates the condensin complex and is required for chromosome condensation. Widely expressed at low level. Expressed in proliferating cells.

The protein localises to the nucleus. Its subcellular location is the cytoplasm. It is found in the chromosome. Regulatory subunit of the condensin complex, a complex required for conversion of interphase chromatin into mitotic-like condense chromosomes. The condensin complex probably introduces positive supercoils into relaxed DNA in the presence of type I topoisomerases and converts nicked DNA into positive knotted forms in the presence of type II topoisomerases. Early in neurogenesis, may play an essential role to ensure accurate mitotic chromosome condensation in neuron stem cells, ultimately affecting neuron pool and cortex size. In Homo sapiens (Human), this protein is Condensin complex subunit 2.